A 168-amino-acid chain; its full sequence is Gastrula zinc finger protein XlCGF7.1 (168 aa).

6 C2H2-type zinc fingers span residues 6-28 (FTCTECGKGFSDKSNLRSHQRTH), 34-56 (FTCTECGKSFSQKIGLHNHLKCH), 62-84 (FMCTECGKSFSNKSNLHTHRKIH), 90-112 (YICTECGKTFPRKKNLQSHQTVH), 118-140 (FTCSECGKCFSQKKNLHTHQKIH), and 146-168 (FKCNECGQAFLRKRNLLSHERIH).

Belongs to the krueppel C2H2-type zinc-finger protein family.

It localises to the nucleus. Its function is as follows. May be involved in transcriptional regulation. In Xenopus laevis (African clawed frog), this protein is Gastrula zinc finger protein XlCGF7.1.